The following is a 313-amino-acid chain: Dimethyladenosine transferase (313 aa).

The tract at residues 1 to 21 is disordered; it reads MPKVKSGAIGRRRGRQEQRRE. Residues H37, L39, G64, E85, D113, and N128 each coordinate S-adenosyl-L-methionine.

It belongs to the class I-like SAM-binding methyltransferase superfamily. rRNA adenine N(6)-methyltransferase family. As to quaternary structure, part of the small subunit (SSU) processome, composed of more than 70 proteins and the RNA chaperone small nucleolar RNA (snoRNA) U3.

It is found in the nucleus. The protein localises to the nucleoplasm. It localises to the nucleolus. It catalyses the reaction adenosine(1779)/adenosine(1780) in 18S rRNA + 4 S-adenosyl-L-methionine = N(6)-dimethyladenosine(1779)/N(6)-dimethyladenosine(1780) in 18S rRNA + 4 S-adenosyl-L-homocysteine + 4 H(+). Functionally, specifically dimethylates two adjacent adenosines in the loop of a conserved hairpin near the 3'-end of 18S rRNA in the 40S particle. Involved in the pre-rRNA processing steps leading to small-subunit rRNA production independently of its RNA-modifying catalytic activity. Part of the small subunit (SSU) processome, first precursor of the small eukaryotic ribosomal subunit. During the assembly of the SSU processome in the nucleolus, many ribosome biogenesis factors, an RNA chaperone and ribosomal proteins associate with the nascent pre-rRNA and work in concert to generate RNA folding, modifications, rearrangements and cleavage as well as targeted degradation of pre-ribosomal RNA by the RNA exosome. This Macaca fascicularis (Crab-eating macaque) protein is Dimethyladenosine transferase (DIMT1).